Consider the following 503-residue polypeptide: Maturase K (503 aa).

This sequence belongs to the intron maturase 2 family. MatK subfamily.

Its subcellular location is the plastid. The protein localises to the chloroplast. Functionally, usually encoded in the trnK tRNA gene intron. Probably assists in splicing its own and other chloroplast group II introns. In Backhousia myrtifolia (Grey myrtle), this protein is Maturase K.